The sequence spans 337 residues: NADH-quinone oxidoreductase subunit H (337 aa).

A run of 8 helical transmembrane segments spans residues 9-29, 77-97, 110-130, 154-174, 181-201, 229-249, 274-294, and 313-333; these read FAKIWAVLIPLFLAVAYFTYV, FLIAPAMAIMPALAAWAVIPF, LLYILAMTSLGVYGLIIAGWA, MGFALVGVLIAAGTMNLSGIV, FWEWFWLPLLPLFLIYWISGV, MAFAVFFLAEYANMLLISFLA, VPGIVWLFAKAAFFAFCYLWF, and VLIPGTVVWLVVLTGLVYGGV.

This sequence belongs to the complex I subunit 1 family. As to quaternary structure, NDH-1 is composed of 14 different subunits. Subunits NuoA, H, J, K, L, M, N constitute the membrane sector of the complex.

It localises to the cell inner membrane. It carries out the reaction a quinone + NADH + 5 H(+)(in) = a quinol + NAD(+) + 4 H(+)(out). NDH-1 shuttles electrons from NADH, via FMN and iron-sulfur (Fe-S) centers, to quinones in the respiratory chain. The immediate electron acceptor for the enzyme in this species is believed to be ubiquinone. Couples the redox reaction to proton translocation (for every two electrons transferred, four hydrogen ions are translocated across the cytoplasmic membrane), and thus conserves the redox energy in a proton gradient. This subunit may bind ubiquinone. This chain is NADH-quinone oxidoreductase subunit H, found in Halorhodospira halophila (strain DSM 244 / SL1) (Ectothiorhodospira halophila (strain DSM 244 / SL1)).